A 341-amino-acid chain; its full sequence is tRNA N6-adenosine threonylcarbamoyltransferase (341 aa).

Fe cation contacts are provided by histidine 115 and histidine 119. Residues 137–141 (IVSGG), aspartate 170, glycine 183, aspartate 187, and asparagine 276 each bind substrate. Aspartate 304 serves as a coordination point for Fe cation.

This sequence belongs to the KAE1 / TsaD family. It depends on Fe(2+) as a cofactor.

The protein resides in the cytoplasm. The enzyme catalyses L-threonylcarbamoyladenylate + adenosine(37) in tRNA = N(6)-L-threonylcarbamoyladenosine(37) in tRNA + AMP + H(+). Required for the formation of a threonylcarbamoyl group on adenosine at position 37 (t(6)A37) in tRNAs that read codons beginning with adenine. Is involved in the transfer of the threonylcarbamoyl moiety of threonylcarbamoyl-AMP (TC-AMP) to the N6 group of A37, together with TsaE and TsaB. TsaD likely plays a direct catalytic role in this reaction. This is tRNA N6-adenosine threonylcarbamoyltransferase from Staphylococcus aureus (strain MSSA476).